A 162-amino-acid chain; its full sequence is Nitric oxide synthase, inducible (162 aa).

The span at 24-37 shows a compositional bias: polar residues; that stretch reads LQYHSLSKQQNESP. Positions 24–65 are disordered; that stretch reads LQYHSLSKQQNESPQPLVGTGKKSPESLVKPDATPLSSPRHV. Zn(2+)-binding residues include Cys90 and Cys95. A (6R)-L-erythro-5,6,7,8-tetrahydrobiopterin-binding site is contributed by Ser98. Glu132 is a binding site for L-arginine. His160 contacts FAD.

The protein belongs to the NOS family. As to quaternary structure, homodimer. Interacts with NHERF1. Interacts with GAPDH; induced by oxidatively-modified low-densitity lipoprotein (LDL(ox)). Interacts with S100A8 and S100A9 to form the iNOS-S100A8/9 transnitrosylase complex. Interacts with SPSB1, SPSB2 and SPSB4. Interacts with ELOC and CUL5 in the presence of SPSB1 or SPSB2 or SPSB4. Forms a complex with ASL, ASS1 and HSP90AA1; the complex regulates cell-autonomous L-arginine synthesis and citrulline recycling while channeling extracellular L-arginine to nitric oxide synthesis pathway. Heme b is required as a cofactor. FAD serves as cofactor. It depends on FMN as a cofactor. Requires (6R)-L-erythro-5,6,7,8-tetrahydrobiopterin as cofactor. Post-translationally, polyubiquitinated; mediated by SPSB1, SPSB2 and SPSB4, leading to proteasomal degradation.

The protein localises to the cytoplasm. It is found in the cytosol. It catalyses the reaction 2 L-arginine + 3 NADPH + 4 O2 + H(+) = 2 L-citrulline + 2 nitric oxide + 3 NADP(+) + 4 H2O. With respect to regulation, regulated by calcium/calmodulin. In terms of biological role, produces nitric oxide (NO) which is a messenger molecule with diverse functions throughout the body. In macrophages, NO mediates tumoricidal and bactericidal actions. Also has nitrosylase activity and mediates cysteine S-nitrosylation of cytoplasmic target proteins such PTGS2/COX2. As component of the iNOS-S100A8/9 transnitrosylase complex involved in the selective inflammatory stimulus-dependent S-nitrosylation of GAPDH implicated in regulation of the GAIT complex activity and probably multiple targets including ANXA5, EZR, MSN and VIM. Involved in inflammation, enhances the synthesis of pro-inflammatory mediators such as IL6 and IL8. The polypeptide is Nitric oxide synthase, inducible (NOS2) (Macaca mulatta (Rhesus macaque)).